A 201-amino-acid polypeptide reads, in one-letter code: 3-isopropylmalate dehydratase small subunit (201 aa).

Belongs to the LeuD family. LeuD type 1 subfamily. As to quaternary structure, heterodimer of LeuC and LeuD.

It catalyses the reaction (2R,3S)-3-isopropylmalate = (2S)-2-isopropylmalate. It functions in the pathway amino-acid biosynthesis; L-leucine biosynthesis; L-leucine from 3-methyl-2-oxobutanoate: step 2/4. In terms of biological role, catalyzes the isomerization between 2-isopropylmalate and 3-isopropylmalate, via the formation of 2-isopropylmaleate. This Shigella dysenteriae serotype 1 (strain Sd197) protein is 3-isopropylmalate dehydratase small subunit.